Here is a 194-residue protein sequence, read N- to C-terminus: ATP synthase subunit delta (194 aa).

This sequence belongs to the ATPase delta chain family. In terms of assembly, F-type ATPases have 2 components, F(1) - the catalytic core - and F(0) - the membrane proton channel. F(1) has five subunits: alpha(3), beta(3), gamma(1), delta(1), epsilon(1). F(0) has three main subunits: a(1), b(2) and c(10-14). The alpha and beta chains form an alternating ring which encloses part of the gamma chain. F(1) is attached to F(0) by a central stalk formed by the gamma and epsilon chains, while a peripheral stalk is formed by the delta and b chains.

It localises to the cell inner membrane. Functionally, f(1)F(0) ATP synthase produces ATP from ADP in the presence of a proton or sodium gradient. F-type ATPases consist of two structural domains, F(1) containing the extramembraneous catalytic core and F(0) containing the membrane proton channel, linked together by a central stalk and a peripheral stalk. During catalysis, ATP synthesis in the catalytic domain of F(1) is coupled via a rotary mechanism of the central stalk subunits to proton translocation. In terms of biological role, this protein is part of the stalk that links CF(0) to CF(1). It either transmits conformational changes from CF(0) to CF(1) or is implicated in proton conduction. In Bartonella quintana (strain Toulouse) (Rochalimaea quintana), this protein is ATP synthase subunit delta.